Consider the following 226-residue polypeptide: Large ribosomal subunit protein uL3 (226 aa).

The disordered stretch occupies residues 136–162 (NFGSQRASHGNSRSHNVPGSISMAQDP). The span at 137-158 (FGSQRASHGNSRSHNVPGSISM) shows a compositional bias: polar residues. An N5-methylglutamine modification is found at Q160.

The protein belongs to the universal ribosomal protein uL3 family. As to quaternary structure, part of the 50S ribosomal subunit. Forms a cluster with proteins L14 and L19. In terms of processing, methylated by PrmB.

One of the primary rRNA binding proteins, it binds directly near the 3'-end of the 23S rRNA, where it nucleates assembly of the 50S subunit. The sequence is that of Large ribosomal subunit protein uL3 from Methylibium petroleiphilum (strain ATCC BAA-1232 / LMG 22953 / PM1).